A 391-amino-acid chain; its full sequence is MKIVLAYSGGLDTTVAIRWLRETFNADVTTVTVDVGQKDDFYQIEKRAYIAGAIKHYTIDAKKDFAERYISYAIKMNGLYEDIYPLSTALARPLIVEKVVEIAKKIGAEAIAHGSTSKGNDQVRFDLAVKALYPEAKIIAPARIWNMTRDKEIEYAKSKGIPIKTESSKYSIDENLWGRSIEGDIISDPSKEVPEDAFEWTKKTKDDKLKISLTFDKGLPVEVNGEKMDLLKVIQVLNELVGSRGFGRVEHLENRVVGFKSREVYEVPAALVLINSHKDLEKSTYTPLEFRFKRSLDGQWSDLVYQGLWFEPLRETIQIAGDNLNKWISGEVFIEVENGNMKILGRKGKFSPFSEEIASYNKGWYPSDEMARGFIEIFGMHSLVARKSRGI.

An ATP-binding site is contributed by Ala6–Thr14. Position 84 (Tyr84) interacts with L-citrulline. ATP is bound at residue Gly114. The L-aspartate site is built by Thr116, Asn120, and Asp121. Asn120 lines the L-citrulline pocket. Residues Arg124, Ser171, Ser180, Glu253, and Tyr265 each contribute to the L-citrulline site.

This sequence belongs to the argininosuccinate synthase family. Type 1 subfamily. In terms of assembly, homotetramer.

The protein resides in the cytoplasm. The catalysed reaction is L-citrulline + L-aspartate + ATP = 2-(N(omega)-L-arginino)succinate + AMP + diphosphate + H(+). The protein operates within amino-acid biosynthesis; L-arginine biosynthesis; L-arginine from L-ornithine and carbamoyl phosphate: step 2/3. This chain is Argininosuccinate synthase, found in Sulfolobus acidocaldarius (strain ATCC 33909 / DSM 639 / JCM 8929 / NBRC 15157 / NCIMB 11770).